The following is a 426-amino-acid chain: DNA polymerase processivity factor component OPG148 (426 aa).

The protein belongs to the orthopoxvirus OPG148 family. In terms of assembly, interacts with the DNA polymerase catalytic subunit OPG071. Interacts with UDG/OPG116. Component of the uracil-DNA glycosylase(UDG)-OPG148-polymerase complex; OPG148 and UDG form a heterodimeric processivity factor that associates with OPG071 to form the processive polymerase holoenzyme. Interacts with OPG117.

Functionally, plays an essential role in viral DNA replication by acting as the polymerase processivity factor together with protein OPG116. Serves as a bridge which links the DNA polymerase OPG071 and the uracil DNA glycosylase. The polypeptide is DNA polymerase processivity factor component OPG148 (OPG148) (Cynomys gunnisoni (Gunnison's prairie dog)).